A 194-amino-acid polypeptide reads, in one-letter code: Glycerol-3-phosphate acyltransferase (194 aa).

5 helical membrane-spanning segments follow: residues 4-24 (EIVL…LLLA), 78-98 (EIWV…TVFL), 110-130 (LGVF…IFVF), 137-157 (YVSL…ALIE), and 161-181 (LLIT…RENI).

The protein belongs to the PlsY family. Probably interacts with PlsX.

The protein localises to the cell inner membrane. It catalyses the reaction an acyl phosphate + sn-glycerol 3-phosphate = a 1-acyl-sn-glycero-3-phosphate + phosphate. The protein operates within lipid metabolism; phospholipid metabolism. Its function is as follows. Catalyzes the transfer of an acyl group from acyl-phosphate (acyl-PO(4)) to glycerol-3-phosphate (G3P) to form lysophosphatidic acid (LPA). This enzyme utilizes acyl-phosphate as fatty acyl donor, but not acyl-CoA or acyl-ACP. This is Glycerol-3-phosphate acyltransferase from Geotalea daltonii (strain DSM 22248 / JCM 15807 / FRC-32) (Geobacter daltonii).